Here is a 480-residue protein sequence, read N- to C-terminus: Dihydrolipoyllysine-residue acetyltransferase component 4 of pyruvate dehydrogenase complex, chloroplastic (480 aa).

Residues 1-53 (MAVSSSSFLSTASLTNSKSNISFASSVSPSLRSVVFRSTTPATSHRRSMTVRS) constitute a chloroplast transit peptide. The region spanning 55-133 (IREIFMPALS…AAIGLLAETE (79 aa)) is the Lipoyl-binding domain. Lys-96 is subject to N6-lipoyllysine. 2 disordered regions span residues 140–168 (KSKAASKSSSSVAEAVVPSPPPVTSSPAP) and 224–245 (AGIAPSKSSIAPPPPPPPPVTA). A compositionally biased stretch (low complexity) spans 142–156 (KAASKSSSSVAEAVV). A Peripheral subunit-binding (PSBD) domain is found at 187-224 (VATPYAKKLAKQHKVDIESVAGTGPFGRITASDVETAA). Over residues 234–243 (APPPPPPPPV) the composition is skewed to pro residues. His-453 is a catalytic residue.

The protein belongs to the 2-oxoacid dehydrogenase family. It depends on (R)-lipoate as a cofactor.

It localises to the plastid. Its subcellular location is the chloroplast stroma. It catalyses the reaction N(6)-[(R)-dihydrolipoyl]-L-lysyl-[protein] + acetyl-CoA = N(6)-[(R)-S(8)-acetyldihydrolipoyl]-L-lysyl-[protein] + CoA. In terms of biological role, the pyruvate dehydrogenase complex catalyzes the overall conversion of pyruvate to acetyl-CoA and CO(2). It contains multiple copies of three enzymatic components: pyruvate dehydrogenase (E1), dihydrolipoamide acetyltransferase (E2) and lipoamide dehydrogenase (E3). In Arabidopsis thaliana (Mouse-ear cress), this protein is Dihydrolipoyllysine-residue acetyltransferase component 4 of pyruvate dehydrogenase complex, chloroplastic (LTA2).